The sequence spans 444 residues: UDP-N-acetylmuramate--L-alanine ligase (444 aa).

G110–S116 is an ATP binding site.

Belongs to the MurCDEF family.

Its subcellular location is the cytoplasm. It catalyses the reaction UDP-N-acetyl-alpha-D-muramate + L-alanine + ATP = UDP-N-acetyl-alpha-D-muramoyl-L-alanine + ADP + phosphate + H(+). It participates in cell wall biogenesis; peptidoglycan biosynthesis. Functionally, cell wall formation. This Streptococcus pneumoniae (strain CGSP14) protein is UDP-N-acetylmuramate--L-alanine ligase.